Reading from the N-terminus, the 234-residue chain is MPIHDWPEQERPREKLMARGPTALSDAELLALFLGSGFGGRDAVQTARDLLQAHGPLRVLLDRPARELARLPGLGPARSCTLAAGLELAHRYLAAELEHGEAVGNNPAAVGRYLQHRLRGQAREIFMALFLDNRHRLIACEELFHGTINAAPVYPREVVRRALLHNAAAVILSHNHPSGDPEPSSADTRITDELQQALAMVDVRLLDHFVVGEGRPVSFAERGLLSPPQPRLFG.

The region spanning 103–225 (VGNNPAAVGR…PVSFAERGLL (123 aa)) is the MPN domain. 3 residues coordinate Zn(2+): His-174, His-176, and Asp-187. The short motif at 174–187 (HNHPSGDPEPSSAD) is the JAMM motif element.

This sequence belongs to the UPF0758 family.

The chain is UPF0758 protein Smal_0281 from Stenotrophomonas maltophilia (strain R551-3).